Reading from the N-terminus, the 201-residue chain is Adenylyl-sulfate kinase (201 aa).

Residue 35–42 (GLSGSGKS) coordinates ATP. The Phosphoserine intermediate role is filled by serine 109.

It belongs to the APS kinase family.

It carries out the reaction adenosine 5'-phosphosulfate + ATP = 3'-phosphoadenylyl sulfate + ADP + H(+). Its pathway is sulfur metabolism; hydrogen sulfide biosynthesis; sulfite from sulfate: step 2/3. In terms of biological role, catalyzes the synthesis of activated sulfate. The protein is Adenylyl-sulfate kinase of Salmonella arizonae (strain ATCC BAA-731 / CDC346-86 / RSK2980).